The primary structure comprises 94 residues: Small ribosomal subunit protein bS18c (94 aa).

This sequence belongs to the bacterial ribosomal protein bS18 family. In terms of assembly, part of the 30S ribosomal subunit.

The protein localises to the plastid. It localises to the chloroplast. This is Small ribosomal subunit protein bS18c from Manihot esculenta (Cassava).